Reading from the N-terminus, the 868-residue chain is mRNA-capping enzyme (868 aa).

Lysine 282 functions as the N6-GMP-lysine intermediate in the catalytic mechanism. Positions 594-868 (GIYRAQTALI…LFGFICLRKN (275 aa)) constitute an mRNA cap 0 methyltransferase domain. S-adenosyl-L-methionine-binding positions include lysine 607, glycine 624, aspartate 646, and 710-712 (LFI).

It in the N-terminal section; belongs to the dsDNA virus mRNA guanylyltransferase family. In the C-terminal section; belongs to the class I-like SAM-binding methyltransferase superfamily. mRNA cap 0 methyltransferase family. Part of the viral DNA-directed RNA polymerase that consists of 8 polII-like subunits (RPB1, RPB2, RPB3, RPB5, RPB6, RPB7, RPB9, RPB10), a capping enzyme and a termination factor.

The protein localises to the virion. It catalyses the reaction a 5'-end triphospho-ribonucleoside in mRNA + H2O = a 5'-end diphospho-ribonucleoside in mRNA + phosphate + H(+). It carries out the reaction a 5'-end diphospho-ribonucleoside in mRNA + GTP + H(+) = a 5'-end (5'-triphosphoguanosine)-ribonucleoside in mRNA + diphosphate. The catalysed reaction is a 5'-end (5'-triphosphoguanosine)-ribonucleoside in mRNA + S-adenosyl-L-methionine = a 5'-end (N(7)-methyl 5'-triphosphoguanosine)-ribonucleoside in mRNA + S-adenosyl-L-homocysteine. The protein operates within mRNA processing; mRNA capping. Probably catalyzes the second reaction in the mRNA cap formation pathway. Forms a covalent complex with GTP. The protein is mRNA-capping enzyme of Ornithodoros (relapsing fever ticks).